The primary structure comprises 654 residues: Tetratricopeptide repeat protein 30 homolog (654 aa).

TPR repeat units lie at residues 10–43 (DGEY…STTR), 44–76 (AGLS…VPDV), 145–178 (ASTK…GGFN), 180–212 (HVAY…GIRN), 393–426 (CRSA…RAWI), 452–485 (SWRL…NYDD), and 535–568 (CIVN…GSGA).

It belongs to the TTC30/dfy-1/fleer family.

The protein localises to the cell projection. It is found in the cilium. Required for polyglutamylation of axonemal tubulin in sensory cilia. Plays a role in anterograde intraflagellar transport (IFT), the process by which cilia precursors are transported from the base of the cilium to the site of their incorporation at the tip. This chain is Tetratricopeptide repeat protein 30 homolog, found in Anopheles gambiae (African malaria mosquito).